Here is a 420-residue protein sequence, read N- to C-terminus: Melatonin receptor type 1C (420 aa).

At 1 to 34 (MMEVNSTCLDCRTPGTIRTEQDAQDSASQGLTSA) the chain is on the extracellular side. Residue Asn5 is glycosylated (N-linked (GlcNAc...) asparagine). A helical transmembrane segment spans residues 35–55 (LAVVLIFTIVVDVLGNILVIL). Residues 56-73 (SVLRNKKLQNAGNLFVVS) lie on the Cytoplasmic side of the membrane. The chain crosses the membrane as a helical span at residues 74–94 (LSIADLVVAVYPYPVILIAIF). Residues 95–106 (QNGWTLGNIHCQ) lie on the Extracellular side of the membrane. A disulfide bond links Cys105 and Cys182. The chain crosses the membrane as a helical span at residues 107 to 127 (ISGFLMGLSVIGSVFNITAIA). Residues 128-152 (INRYCYICHSLRYDKLYNQRSTWCY) lie on the Cytoplasmic side of the membrane. Residues 153-173 (LGLTWILTIIAIVPNFFVGSL) form a helical membrane-spanning segment. Residues 174 to 192 (QYDPRIFSCTFAQTVSSSY) are Extracellular-facing. A helical membrane pass occupies residues 193–213 (TITVVVVHFIVPLSVVTFCYL). At 214–245 (RIWVLVIQVKHRVRQDFKQKLTQTDLRNFLTM) the chain is on the cytoplasmic side. The helical transmembrane segment at 246 to 266 (FVVFVLFAVCWAPLNFIGLAV) threads the bilayer. At 267–279 (AINPFHVAPKIPE) the chain is on the extracellular side. The chain crosses the membrane as a helical span at residues 280–303 (WLFVLSYFMAYFNSCLNAVIYGVL). At 304 to 420 (NQNFRKEYKR…ELCKDGISQR (117 aa)) the chain is on the cytoplasmic side.

This sequence belongs to the G-protein coupled receptor 1 family. In terms of tissue distribution, moderately expressed in dermal melanophores.

It localises to the cell membrane. Its function is as follows. High affinity receptor for melatonin. Likely to mediate the potent effects of melatonin on pigment aggregation in melanophores. The activity of this receptor is mediated by pertussis toxin sensitive G proteins that inhibit adenylate cyclase activity. The chain is Melatonin receptor type 1C (mtnr1c) from Xenopus laevis (African clawed frog).